The following is a 586-amino-acid chain: A-type ATP synthase subunit A (586 aa).

Residue 232–239 (GPFGSGKT) coordinates ATP.

The protein belongs to the ATPase alpha/beta chains family. As to quaternary structure, has multiple subunits with at least A(3), B(3), C, D, E, F, H, I and proteolipid K(x).

The protein localises to the cell membrane. The catalysed reaction is ATP + H2O + 4 H(+)(in) = ADP + phosphate + 5 H(+)(out). Component of the A-type ATP synthase that produces ATP from ADP in the presence of a proton gradient across the membrane. The A chain is the catalytic subunit. This chain is A-type ATP synthase subunit A, found in Methanococcus maripaludis (strain C5 / ATCC BAA-1333).